The chain runs to 262 residues: 14-3-3-like protein GF14-E (262 aa).

It belongs to the 14-3-3 family. Ubiquitous.

Its subcellular location is the cytoplasm. The protein localises to the nucleus. Its function is as follows. Is associated with a DNA binding complex that binds to the G box, a well-characterized cis-acting DNA regulatory element found in plant genes. The chain is 14-3-3-like protein GF14-E (GF14E) from Oryza sativa subsp. japonica (Rice).